We begin with the raw amino-acid sequence, 106 residues long: P4 prophage-derived uncharacterized protein t2655 (106 aa).

In Salmonella typhi, this protein is P4 prophage-derived uncharacterized protein t2655.